Here is a 424-residue protein sequence, read N- to C-terminus: UPF0229 protein Ping_2705 (424 aa).

The interval 77–108 is disordered; sequence PGNQDFIGGDRIERPPSGGAGGSGSGASDSGK.

It belongs to the UPF0229 family.

In Psychromonas ingrahamii (strain DSM 17664 / CCUG 51855 / 37), this protein is UPF0229 protein Ping_2705.